We begin with the raw amino-acid sequence, 473 residues long: Cell division protein FtsP (473 aa).

Positions 1–27 (MSFSRRQFIQVSGLAMCIGAAPLLVRA) form a signal peptide, tat-type signal.

This sequence belongs to the FtsP family. In terms of processing, predicted to be exported by the Tat system. The position of the signal peptide cleavage has not been experimentally proven.

The protein resides in the periplasm. Its function is as follows. Cell division protein that is required for growth during stress conditions. May be involved in protecting or stabilizing the divisomal assembly under conditions of stress. This Photorhabdus laumondii subsp. laumondii (strain DSM 15139 / CIP 105565 / TT01) (Photorhabdus luminescens subsp. laumondii) protein is Cell division protein FtsP.